Reading from the N-terminus, the 59-residue chain is Large ribosomal subunit protein bL32 (59 aa).

The interval 1–25 (MAVQQNKKSPSKRGMHRSHDFLNAA) is disordered.

This sequence belongs to the bacterial ribosomal protein bL32 family.

This Paraburkholderia phymatum (strain DSM 17167 / CIP 108236 / LMG 21445 / STM815) (Burkholderia phymatum) protein is Large ribosomal subunit protein bL32.